We begin with the raw amino-acid sequence, 456 residues long: Cysteine--tRNA ligase (456 aa).

Residue cysteine 29 participates in Zn(2+) binding. A 'HIGH' region motif is present at residues 31–41 (PTVYDYAHVGN). 3 residues coordinate Zn(2+): cysteine 209, histidine 234, and glutamate 238. A 'KMSKS' region motif is present at residues 267–271 (KMSKS). ATP is bound at residue lysine 270.

It belongs to the class-I aminoacyl-tRNA synthetase family. As to quaternary structure, monomer. It depends on Zn(2+) as a cofactor.

The protein resides in the cytoplasm. The catalysed reaction is tRNA(Cys) + L-cysteine + ATP = L-cysteinyl-tRNA(Cys) + AMP + diphosphate. This is Cysteine--tRNA ligase from Rhodospirillum centenum (strain ATCC 51521 / SW).